The following is a 223-amino-acid chain: GrpE protein homolog, mitochondrial (223 aa).

It belongs to the GrpE family. Component of the PAM complex, at least composed of mtHsp70, mge1, tim44, pam16, pam17 and pam18.

The protein localises to the mitochondrion matrix. In terms of biological role, essential component of the PAM complex, a complex required for the translocation of transit peptide-containing proteins from the inner membrane into the mitochondrial matrix in an ATP-dependent manner. Seems to control the nucleotide-dependent binding of ssc1 to substrate proteins. The protein is GrpE protein homolog, mitochondrial (mge1) of Schizosaccharomyces pombe (strain 972 / ATCC 24843) (Fission yeast).